The following is a 429-amino-acid chain: UDP-N-acetylglucosamine 1-carboxyvinyltransferase (429 aa).

22-23 (KN) lines the phosphoenolpyruvate pocket. Residue Arg-102 coordinates UDP-N-acetyl-alpha-D-glucosamine. The Proton donor role is filled by Cys-126. Cys-126 carries the post-translational modification 2-(S-cysteinyl)pyruvic acid O-phosphothioketal. Residues 131 to 135 (RPVDL), Asp-316, and Ile-338 contribute to the UDP-N-acetyl-alpha-D-glucosamine site.

This sequence belongs to the EPSP synthase family. MurA subfamily.

The protein resides in the cytoplasm. It catalyses the reaction phosphoenolpyruvate + UDP-N-acetyl-alpha-D-glucosamine = UDP-N-acetyl-3-O-(1-carboxyvinyl)-alpha-D-glucosamine + phosphate. Its pathway is cell wall biogenesis; peptidoglycan biosynthesis. In terms of biological role, cell wall formation. Adds enolpyruvyl to UDP-N-acetylglucosamine. This Rhodopseudomonas palustris (strain HaA2) protein is UDP-N-acetylglucosamine 1-carboxyvinyltransferase.